The primary structure comprises 224 residues: DNA repair and recombination protein RadB (224 aa).

Belongs to the eukaryotic RecA-like protein family. RadB subfamily.

Functionally, involved in DNA repair and in homologous recombination. May regulate the cleavage reactions of the branch-structured DNA. Has a very weak ATPase activity that is not stimulated by DNA. Binds DNA but does not promote DNA strands exchange. The polypeptide is DNA repair and recombination protein RadB (Methanoculleus marisnigri (strain ATCC 35101 / DSM 1498 / JR1)).